Here is a 105-residue protein sequence, read N- to C-terminus: Large ribosomal subunit protein uL24 (105 aa).

Belongs to the universal ribosomal protein uL24 family. As to quaternary structure, part of the 50S ribosomal subunit.

One of two assembly initiator proteins, it binds directly to the 5'-end of the 23S rRNA, where it nucleates assembly of the 50S subunit. Functionally, one of the proteins that surrounds the polypeptide exit tunnel on the outside of the subunit. The polypeptide is Large ribosomal subunit protein uL24 (Thermotoga petrophila (strain ATCC BAA-488 / DSM 13995 / JCM 10881 / RKU-1)).